Reading from the N-terminus, the 477-residue chain is ACT domain-containing protein ACR1 (477 aa).

ACT domains lie at 38–124 (LIKV…REVQ), 134–214 (AFEI…GDVS), 283–358 (MVNV…RASQ), and 361–441 (KLEI…MMPR). The Bipartite nuclear localization signal motif lies at 329–345 (KKNGGTLETEGQRERLR).

Expressed in flowers and siliques.

It localises to the nucleus. Functionally, may bind amino acids. This Arabidopsis thaliana (Mouse-ear cress) protein is ACT domain-containing protein ACR1.